We begin with the raw amino-acid sequence, 1102 residues long: DNA-directed RNA polymerase subunit beta (1102 aa).

Residues 1081–1102 (LPGKRTPSRPIYESLSTEGNQD) form a disordered region.

This sequence belongs to the RNA polymerase beta chain family. In cyanobacteria the RNAP catalytic core is composed of 2 alpha, 1 beta, 1 beta', 1 gamma and 1 omega subunit. When a sigma factor is associated with the core the holoenzyme is formed, which can initiate transcription.

It carries out the reaction RNA(n) + a ribonucleoside 5'-triphosphate = RNA(n+1) + diphosphate. In terms of biological role, DNA-dependent RNA polymerase catalyzes the transcription of DNA into RNA using the four ribonucleoside triphosphates as substrates. This Trichodesmium erythraeum (strain IMS101) protein is DNA-directed RNA polymerase subunit beta.